The sequence spans 78 residues: Large ribosomal subunit protein uL29 (78 aa).

Belongs to the universal ribosomal protein uL29 family.

The polypeptide is Large ribosomal subunit protein uL29 (Salinispora arenicola (strain CNS-205)).